The chain runs to 145 residues: D-aminoacyl-tRNA deacylase (145 aa).

A Gly-cisPro motif, important for rejection of L-amino acids motif is present at residues 137–138 (GP).

Belongs to the DTD family. As to quaternary structure, homodimer.

Its subcellular location is the cytoplasm. The enzyme catalyses glycyl-tRNA(Ala) + H2O = tRNA(Ala) + glycine + H(+). It catalyses the reaction a D-aminoacyl-tRNA + H2O = a tRNA + a D-alpha-amino acid + H(+). An aminoacyl-tRNA editing enzyme that deacylates mischarged D-aminoacyl-tRNAs. Also deacylates mischarged glycyl-tRNA(Ala), protecting cells against glycine mischarging by AlaRS. Acts via tRNA-based rather than protein-based catalysis; rejects L-amino acids rather than detecting D-amino acids in the active site. By recycling D-aminoacyl-tRNA to D-amino acids and free tRNA molecules, this enzyme counteracts the toxicity associated with the formation of D-aminoacyl-tRNA entities in vivo and helps enforce protein L-homochirality. The polypeptide is D-aminoacyl-tRNA deacylase (Francisella tularensis subsp. holarctica (strain FTNF002-00 / FTA)).